A 358-amino-acid chain; its full sequence is Transcriptional repressor protein KorB (358 aa).

A compositionally biased stretch (low complexity) spans 1-42 (MTAAQAKTTKKNTAAAAQEAAGAAQPSGLGLDSIGDLSSLLD). Disordered stretches follow at residues 1-79 (MTAA…FSPE) and 256-305 (DPNT…DKLK). The segment covering 275-285 (AGDGQDGEDGD) has biased composition (acidic residues). Over residues 286-305 (QDGKDAKEKGAKEPDPDKLK) the composition is skewed to basic and acidic residues.

The protein belongs to the ParB family.

Functionally, in conjunction with KorA, inhibits the transcription of the kilA, trfA and korAB operons. Is also involved in the negative control of the kilB operon. In Escherichia coli, this protein is Transcriptional repressor protein KorB (korB).